Here is a 472-residue protein sequence, read N- to C-terminus: Siroheme synthase (472 aa).

Positions 1–204 (MDYLPIFTKL…GQTEKAIALM (204 aa)) are precorrin-2 dehydrogenase /sirohydrochlorin ferrochelatase. NAD(+) contacts are provided by residues 22–23 (SI) and 43–44 (LE). Ser128 is subject to Phosphoserine. A uroporphyrinogen-III C-methyltransferase region spans residues 215–472 (GDVALVGAGP…SRDPFLVNLA (258 aa)). Position 224 (Pro224) interacts with S-adenosyl-L-methionine. Asp247 acts as the Proton acceptor in catalysis. The active-site Proton donor is Lys269. S-adenosyl-L-methionine is bound by residues 300–302 (GGD), Ile305, 330–331 (TA), Met382, and Gly411.

The protein in the N-terminal section; belongs to the precorrin-2 dehydrogenase / sirohydrochlorin ferrochelatase family. It in the C-terminal section; belongs to the precorrin methyltransferase family.

It catalyses the reaction uroporphyrinogen III + 2 S-adenosyl-L-methionine = precorrin-2 + 2 S-adenosyl-L-homocysteine + H(+). The catalysed reaction is precorrin-2 + NAD(+) = sirohydrochlorin + NADH + 2 H(+). The enzyme catalyses siroheme + 2 H(+) = sirohydrochlorin + Fe(2+). Its pathway is cofactor biosynthesis; adenosylcobalamin biosynthesis; precorrin-2 from uroporphyrinogen III: step 1/1. It functions in the pathway cofactor biosynthesis; adenosylcobalamin biosynthesis; sirohydrochlorin from precorrin-2: step 1/1. The protein operates within porphyrin-containing compound metabolism; siroheme biosynthesis; precorrin-2 from uroporphyrinogen III: step 1/1. It participates in porphyrin-containing compound metabolism; siroheme biosynthesis; siroheme from sirohydrochlorin: step 1/1. Its pathway is porphyrin-containing compound metabolism; siroheme biosynthesis; sirohydrochlorin from precorrin-2: step 1/1. Its function is as follows. Multifunctional enzyme that catalyzes the SAM-dependent methylations of uroporphyrinogen III at position C-2 and C-7 to form precorrin-2 via precorrin-1. Then it catalyzes the NAD-dependent ring dehydrogenation of precorrin-2 to yield sirohydrochlorin. Finally, it catalyzes the ferrochelation of sirohydrochlorin to yield siroheme. This is Siroheme synthase from Psychromonas ingrahamii (strain DSM 17664 / CCUG 51855 / 37).